A 342-amino-acid chain; its full sequence is N-acetyl-gamma-glutamyl-phosphate reductase (342 aa).

Cys-149 is a catalytic residue.

This sequence belongs to the NAGSA dehydrogenase family. Type 1 subfamily.

The protein resides in the cytoplasm. The enzyme catalyses N-acetyl-L-glutamate 5-semialdehyde + phosphate + NADP(+) = N-acetyl-L-glutamyl 5-phosphate + NADPH + H(+). It functions in the pathway amino-acid biosynthesis; L-arginine biosynthesis; N(2)-acetyl-L-ornithine from L-glutamate: step 3/4. In terms of biological role, catalyzes the NADPH-dependent reduction of N-acetyl-5-glutamyl phosphate to yield N-acetyl-L-glutamate 5-semialdehyde. The chain is N-acetyl-gamma-glutamyl-phosphate reductase from Nitrosomonas europaea (strain ATCC 19718 / CIP 103999 / KCTC 2705 / NBRC 14298).